A 276-amino-acid polypeptide reads, in one-letter code: 2,3,4,5-tetrahydropyridine-2,6-dicarboxylate N-succinyltransferase (276 aa).

Residues Arg108 and Asp145 each contribute to the substrate site.

Belongs to the transferase hexapeptide repeat family. As to quaternary structure, homotrimer.

The protein resides in the cytoplasm. The enzyme catalyses (S)-2,3,4,5-tetrahydrodipicolinate + succinyl-CoA + H2O = (S)-2-succinylamino-6-oxoheptanedioate + CoA. It functions in the pathway amino-acid biosynthesis; L-lysine biosynthesis via DAP pathway; LL-2,6-diaminopimelate from (S)-tetrahydrodipicolinate (succinylase route): step 1/3. The polypeptide is 2,3,4,5-tetrahydropyridine-2,6-dicarboxylate N-succinyltransferase (Caulobacter vibrioides (strain ATCC 19089 / CIP 103742 / CB 15) (Caulobacter crescentus)).